Reading from the N-terminus, the 283-residue chain is Bifunctional protein FolD (283 aa).

NADP(+) is bound by residues 165–167 (GRG), threonine 192, and valine 233.

The protein belongs to the tetrahydrofolate dehydrogenase/cyclohydrolase family. In terms of assembly, homodimer.

The enzyme catalyses (6R)-5,10-methylene-5,6,7,8-tetrahydrofolate + NADP(+) = (6R)-5,10-methenyltetrahydrofolate + NADPH. The catalysed reaction is (6R)-5,10-methenyltetrahydrofolate + H2O = (6R)-10-formyltetrahydrofolate + H(+). It functions in the pathway one-carbon metabolism; tetrahydrofolate interconversion. Functionally, catalyzes the oxidation of 5,10-methylenetetrahydrofolate to 5,10-methenyltetrahydrofolate and then the hydrolysis of 5,10-methenyltetrahydrofolate to 10-formyltetrahydrofolate. The chain is Bifunctional protein FolD from Thermobifida fusca (strain YX).